We begin with the raw amino-acid sequence, 637 residues long: MGKIIGIDLGTTNSCVAVMEAGEPKVITNSEGNRTTPSVVALTEGGDRLVGQTAKRQAITNPENTVFGVKRLIGRKFDSPQIQGDKKVLPYKIEASANGDTRINLRGKQHSPAEISSFILANIKKTAEDYLGEEVTEAVITVPAYFNDSQRQATKDAGKIAGLTVKRIINEPTAASLAYGLDKKGEEKIVVFDLGGGTFDVSVLEIGDGVFEVKSTNGDTHLGGEDFDLRIIDYIADEFKKSQGIDIRGDKMALQRLKEAAEKAKMELSSAVETDINLPFITADASGPKHLDVKLTRAKLESLVADLLDNLVAPCKTALKDAGLTSSDINEVVLVGGMTRMPAVQERVEKIFSKKPHKGVNPDEVVAMGAAIQAGVLQGDVHDVLLLDVTPLSLGIETLGGVMTKLIDKNTTIPTKKSQVFSTAADSQPAVSIHVLQGEREMAAGNKTLGQFELTDLPPAPRGVPQIEVTFDIDANGIVHVAAKDKATGKEQSIRITAASGLSEEEIKKMVNDAELHADEDKKKHELVDAKNTAESLIHQTEKTLKEHGDKVDAATKTAIEAACEELKKVKEGTDAAIIKEKSEALTQASHKLAEAMYQQAAQESGQTEGAAQDPKGAAQDDDVVDADFEEVKDHKK.

A Phosphothreonine; by autocatalysis modification is found at Thr-198. The segment at 597-637 (MYQQAAQESGQTEGAAQDPKGAAQDDDVVDADFEEVKDHKK) is disordered. Positions 600 to 610 (QAAQESGQTEG) are enriched in polar residues. Residues 620-629 (QDDDVVDADF) show a composition bias toward acidic residues.

Belongs to the heat shock protein 70 family.

Functionally, acts as a chaperone. This Desulforapulum autotrophicum (strain ATCC 43914 / DSM 3382 / VKM B-1955 / HRM2) (Desulfobacterium autotrophicum) protein is Chaperone protein DnaK.